A 486-amino-acid chain; its full sequence is MADSSCGKKSTKCPHCSSASQKNALCICSCKTKLSPMSVVEMSQTSSTGSSEFIVSPEKRKEKGASKDVTSGKDSPSKSSNIERKPSQQQWGRGNFTEGKVPHIRMDNGAALQEIYTFGRILGQGSFGMVIEAIDKERETKWAIKKVNKEKAGSSAVKLLEREVDILKSVKHEHIIHLEQVFETPKKMYLVMELCEDGELKEILERKGHFSENETRWIIQSLASAIAYLHNKDIVHRDLKLENIMVKSSFIDANNEMNLNIKVTDFGLAVKKHGRSEVMLQTTCGTPIYMAPEVINAHDYSQQCDIWSIGVIMYILLCGKAPFMASSEEKLFELIKKGELHFKNSIWNSISDCAKSVLKQLMKVDPAHRITAKELLDNQWLTGNTVSSARPTNVLEMMKEWKNNPESDEESTTDQRDSRSGQEESKVYQPSRNVPDVSNSSDEEEGKQVGRTNKTCRKNNCFISPNCEIPSQHLEHFCNSFFVVGL.

A disordered region spans residues 39–100 (VVEMSQTSST…WGRGNFTEGK (62 aa)). The segment covering 41–53 (EMSQTSSTGSSEF) has biased composition (polar residues). Over residues 57–66 (PEKRKEKGAS) the composition is skewed to basic and acidic residues. Residues 68–80 (DVTSGKDSPSKSS) show a composition bias toward polar residues. Residues 116 to 381 (YTFGRILGQG…AKELLDNQWL (266 aa)) form the Protein kinase domain. ATP contacts are provided by residues 122 to 130 (LGQGSFGMV) and Lys-145. Asp-238 functions as the Proton acceptor in the catalytic mechanism. The disordered stretch occupies residues 402 to 451 (KNNPESDEESTTDQRDSRSGQEESKVYQPSRNVPDVSNSSDEEEGKQVGR). At Ser-407 the chain carries Phosphoserine. A compositionally biased stretch (basic and acidic residues) spans 413–426 (TDQRDSRSGQEESK). The span at 428–440 (YQPSRNVPDVSNS) shows a compositional bias: polar residues.

This sequence belongs to the protein kinase superfamily. CAMK Ser/Thr protein kinase family. CaMK subfamily. Interacts with vimentin/VIM. Autophosphorylated.

Its subcellular location is the cytoplasm. It localises to the perinuclear region. It catalyses the reaction L-seryl-[protein] + ATP = O-phospho-L-seryl-[protein] + ADP + H(+). It carries out the reaction L-threonyl-[protein] + ATP = O-phospho-L-threonyl-[protein] + ADP + H(+). Functionally, serine/threonine protein kinase which phosphorylates vimentin/VIM. Therefore may play a specific role in the dynamic behavior of the intermediate filament cytoskeleton. The chain is Serine/threonine-protein kinase 33 (STK33) from Bos taurus (Bovine).